Consider the following 347-residue polypeptide: tRNA pseudouridine synthase D (347 aa).

Catalysis depends on D81, which acts as the Nucleophile. The TRUD domain occupies 158 to 305 (GVPNYFGSQR…RHDRREIALK (148 aa)).

The protein belongs to the pseudouridine synthase TruD family.

The catalysed reaction is uridine(13) in tRNA = pseudouridine(13) in tRNA. In terms of biological role, responsible for synthesis of pseudouridine from uracil-13 in transfer RNAs. This is tRNA pseudouridine synthase D from Vibrio parahaemolyticus serotype O3:K6 (strain RIMD 2210633).